The following is a 171-amino-acid chain: Ly6/PLAUR domain-containing protein 6 (171 aa).

An N-terminal signal peptide occupies residues 1–25 (MEPSPALAWLLLLSLVADCLKAAQS). The region spanning 47–141 (FKCFTCEKAA…PRNETDATFA (95 aa)) is the UPAR/Ly6 domain. 6 disulfide bridges follow: cysteine 49/cysteine 77, cysteine 52/cysteine 61, cysteine 70/cysteine 96, cysteine 102/cysteine 121, cysteine 107/cysteine 118, and cysteine 122/cysteine 127. The NxI motif motif lies at 88-90 (NSI). N-linked (GlcNAc...) asparagine glycosylation is found at asparagine 134 and asparagine 147. Asparagine 147 carries GPI-anchor amidated asparagine lipidation. The propeptide at 148–171 (QTNGHPHCVSVIVSCLWVWLGLTL) is removed in mature form.

Interacts with nicotinic acetylcholine receptors (nAChRs) including CHRNA3, CHRNA4, CHRNA5, CHRNA6, CHRNA7, CHRNB2 and CHRNB4. Interacts (via NxI motif) with LRP6. In terms of tissue distribution, detected in the frontal cortex and hippocampus (at protein level). Highly expressed in the brain and spinal cord, as well as dorsal root and trigeminal ganglia.

Its subcellular location is the secreted. The protein resides in the cytoplasm. It localises to the cell membrane. The protein localises to the synapse. It is found in the synaptosome. Its subcellular location is the membrane raft. The protein resides in the cell projection. It localises to the dendrite. The protein localises to the perikaryon. In terms of biological role, acts as a modulator of nicotinic acetylcholine receptors (nAChRs) function in the brain. Inhibits nicotine-induced Ca(2+) influx through nAChRs. In vitro, specifically inhibits alpha-3:beta-4 and alpha-7 nAChR currents in an allosteric manner. Acts as a positive regulator of Wnt/beta-catenin signaling. The chain is Ly6/PLAUR domain-containing protein 6 (Lypd6) from Mus musculus (Mouse).